The following is a 349-amino-acid chain: Phenylalanine--tRNA ligase alpha subunit (349 aa).

Glutamate 259 contributes to the Mg(2+) binding site.

This sequence belongs to the class-II aminoacyl-tRNA synthetase family. Phe-tRNA synthetase alpha subunit type 1 subfamily. Tetramer of two alpha and two beta subunits. Requires Mg(2+) as cofactor.

It is found in the cytoplasm. It catalyses the reaction tRNA(Phe) + L-phenylalanine + ATP = L-phenylalanyl-tRNA(Phe) + AMP + diphosphate + H(+). The polypeptide is Phenylalanine--tRNA ligase alpha subunit (Lactobacillus gasseri (strain ATCC 33323 / DSM 20243 / BCRC 14619 / CIP 102991 / JCM 1131 / KCTC 3163 / NCIMB 11718 / NCTC 13722 / AM63)).